The following is a 109-amino-acid chain: Death-associated protein-like 1 homolog (109 aa).

Disordered stretches follow at residues 1-51 (MVQL…KPRS) and 76-100 (FPETPVSVRHSRVRPSVEKPHISRI). The span at 31 to 50 (KSADENANVEKETRKTDKPR) shows a compositional bias: basic and acidic residues.

Belongs to the DAP-DAPL1 family. Associates with ribosomes; preventing translation. Interacts with eiF5a (eif5a and eif5a2); preventing translation.

In terms of biological role, ribosome-binding protein that promotes ribosome hibernation, a process during which ribosomes are stabilized in an inactive state and preserved from proteasomal degradation. Acts via its association with eiF5a (eif5a and eif5a2) at the polypeptide exit tunnel of the ribosome, preventing mRNA translation. Plays a key role in ribosome hibernation in the mature egg by preventing mRNA translation, leading to ribosome inactivation. Ribosomes, which are produced in large quantities during oogenesis, are stored and translationally repressed in the egg and early embryo. This is Death-associated protein-like 1 homolog from Danio rerio (Zebrafish).